We begin with the raw amino-acid sequence, 316 residues long: Small ribosomal subunit biogenesis GTPase RsgA (316 aa).

The disordered stretch occupies residues 1–20 (MSKLSHQQQRRIHNHRQNKL). Positions 8-18 (QQRRIHNHRQN) are enriched in basic residues. The CP-type G domain maps to 92–251 (AGKLKPVASN…IIDTPGVRGF (160 aa)). GTP contacts are provided by residues 139-142 (NKSD) and 193-201 (GQSGVGKSS). Zn(2+) is bound by residues Cys-275, Cys-280, His-282, and Cys-288.

Belongs to the TRAFAC class YlqF/YawG GTPase family. RsgA subfamily. As to quaternary structure, monomer. Associates with 30S ribosomal subunit, binds 16S rRNA. It depends on Zn(2+) as a cofactor.

The protein localises to the cytoplasm. In terms of biological role, one of several proteins that assist in the late maturation steps of the functional core of the 30S ribosomal subunit. Helps release RbfA from mature subunits. May play a role in the assembly of ribosomal proteins into the subunit. Circularly permuted GTPase that catalyzes slow GTP hydrolysis, GTPase activity is stimulated by the 30S ribosomal subunit. The chain is Small ribosomal subunit biogenesis GTPase RsgA from Dichelobacter nodosus (strain VCS1703A).